Here is a 339-residue protein sequence, read N- to C-terminus: Anthranilate phosphoribosyltransferase (339 aa).

5-phospho-alpha-D-ribose 1-diphosphate contacts are provided by residues glycine 81, 84–85 (GD), serine 89, 91–94 (NVSS), 109–117 (KHGNRALSS), and alanine 121. Glycine 81 is a binding site for anthranilate. Serine 93 serves as a coordination point for Mg(2+). Anthranilate is bound at residue asparagine 112. Position 167 (arginine 167) interacts with anthranilate. Mg(2+)-binding residues include aspartate 225 and glutamate 226.

It belongs to the anthranilate phosphoribosyltransferase family. As to quaternary structure, homodimer. Mg(2+) is required as a cofactor.

It carries out the reaction N-(5-phospho-beta-D-ribosyl)anthranilate + diphosphate = 5-phospho-alpha-D-ribose 1-diphosphate + anthranilate. It functions in the pathway amino-acid biosynthesis; L-tryptophan biosynthesis; L-tryptophan from chorismate: step 2/5. Catalyzes the transfer of the phosphoribosyl group of 5-phosphorylribose-1-pyrophosphate (PRPP) to anthranilate to yield N-(5'-phosphoribosyl)-anthranilate (PRA). The protein is Anthranilate phosphoribosyltransferase of Brucella suis biovar 1 (strain 1330).